A 178-amino-acid chain; its full sequence is Tetratricopeptide repeat protein 9C (178 aa).

TPR repeat units lie at residues 15-48 (ASSF…LRSL), 79-114 (ADCY…QPEN), and 115-148 (VKAL…APKD).

Belongs to the TTC9 family.

This chain is Tetratricopeptide repeat protein 9C (ttc9c), found in Xenopus tropicalis (Western clawed frog).